A 729-amino-acid polypeptide reads, in one-letter code: Solute carrier family 15 member 2 (729 aa).

Positions methionine 1–proline 35 are disordered. Topologically, residues methionine 1–arginine 57 are cytoplasmic. Position 9 is a phosphoserine (serine 9). Position 12 is a phosphothreonine (threonine 12). Serine 28 carries the phosphoserine modification. The helical transmembrane segment at phenylalanine 58–asparagine 78 threads the bilayer. Residues glutamate 79–histidine 87 lie on the Extracellular side of the membrane. The helical transmembrane segment at alanine 88 to leucine 108 threads the bilayer. Residues glycine 109 to threonine 113 are Cytoplasmic-facing. The helical transmembrane segment at isoleucine 114–proline 134 threads the bilayer. Residues isoleucine 135–lysine 139 lie on the Extracellular side of the membrane. A helical membrane pass occupies residues methionine 140–isoleucine 160. Residues lysine 161–tyrosine 183 are Cytoplasmic-facing. Residues phenylalanine 184–methionine 204 form a helical membrane-spanning segment. At leucine 205–tyrosine 217 the chain is on the extracellular side. The helical transmembrane segment at alanine 218–glycine 238 threads the bilayer. Residues serine 239–aspartate 295 lie on the Cytoplasmic side of the membrane. Residues valine 296–leucine 316 traverse the membrane as a helical segment. Residues aspartate 317–glutamine 343 are Extracellular-facing. A helical membrane pass occupies residues methionine 344–tyrosine 364. Residues arginine 365–methionine 380 lie on the Cytoplasmic side of the membrane. Residues alanine 381–isoleucine 401 form a helical membrane-spanning segment. At asparagine 402 to glutamine 611 the chain is on the extracellular side. The segment at asparagine 402–glutamine 611 is extracellular domain (ECD). N-linked (GlcNAc...) asparagine glycosylation is found at asparagine 435, asparagine 448, asparagine 528, and asparagine 587. The chain crosses the membrane as a helical span at residues leucine 612–phenylalanine 632. Topologically, residues serine 633–serine 643 are cytoplasmic. Residues valine 644 to alanine 664 form a helical membrane-spanning segment. Over glutamine 665 to glutamate 674 the chain is Extracellular. Residues phenylalanine 675–tyrosine 695 traverse the membrane as a helical segment. Residues tyrosine 696–leucine 729 lie on the Cytoplasmic side of the membrane.

The protein belongs to the major facilitator superfamily. Proton-dependent oligopeptide transporter (POT/PTR) (TC 2.A.17) family. As to quaternary structure, interacts (via extracellular domain region) with trypsin. Strongly expressed in kidney cortex and medulla. Also detected in brain, lung and spleen. Expressed in choroid plexus.

It is found in the apical cell membrane. It localises to the cytoplasmic vesicle. The protein localises to the phagosome membrane. Its subcellular location is the cell membrane. The enzyme catalyses a dipeptide(out) + 2 H(+)(out) = a dipeptide(in) + 2 H(+)(in). It catalyses the reaction glycyl-L-leucine(out) + 2 H(+)(out) = glycyl-L-leucine(in) + 2 H(+)(in). The catalysed reaction is glycyl-L-lysine(out) + 2 H(+)(out) = glycyl-L-lysine(in) + 2 H(+)(in). It carries out the reaction glycyl-L-glutamate(out) + 3 H(+)(out) = glycyl-L-glutamate(in) + 3 H(+)(in). The enzyme catalyses L-alanyl-L-alanine(out) + 2 H(+)(out) = L-alanyl-L-alanine(in) + 2 H(+)(in). It catalyses the reaction an L-amino acid tripeptide(out) + 2 H(+)(out) = an L-amino acid tripeptide(in) + 2 H(+)(in). The catalysed reaction is N-acetyl-D-muramoyl-L-alanyl-D-isoglutamine(out) + 3 H(+)(out) = N-acetyl-D-muramoyl-L-alanyl-D-isoglutamine(in) + 3 H(+)(in). It carries out the reaction carnosine(out) + 2 H(+)(out) = carnosine(in) + 2 H(+)(in). Proton-coupled amino-acid transporter that transports oligopeptides of 2 to 4 amino acids with a preference for dipeptides. Transports neutral and anionic dipeptides with a proton to peptide stoichiometry of 2:1 or 3:1. In kidney, involved in the absorption of circulating di- and tripeptides from the glomerular filtrate. Can also transport beta-lactam antibiotics, such as the aminocephalosporin cefadroxil, and other antiviral and anticancer drugs. Transports the dipeptide-like aminopeptidase inhibitor bestatin. Also able to transport carnosine. Involved in innate immunity by promoting the detection of microbial pathogens by NOD-like receptors (NLRs). Mediates transport of bacterial peptidoglycans across the plasma membrane or, in macrophages, the phagosome membrane: catalyzes the transport of certain bacterial peptidoglycans, such as muramyl dipeptide (MDP), the NOD2 ligand. In Rattus norvegicus (Rat), this protein is Solute carrier family 15 member 2.